A 241-amino-acid polypeptide reads, in one-letter code: Small ribosomal subunit protein uS2 (241 aa).

This sequence belongs to the universal ribosomal protein uS2 family.

This chain is Small ribosomal subunit protein uS2, found in Salmonella choleraesuis (strain SC-B67).